The chain runs to 347 residues: 4-hydroxy-2-oxovalerate aldolase (347 aa).

One can recognise a Pyruvate carboxyltransferase domain in the interval 2-252 (ILISDATLRD…DTRTTFEHVM (251 aa)). 10–11 (RD) contacts substrate. Asp11 lines the Mn(2+) pocket. His14 acts as the Proton acceptor in catalysis. 2 residues coordinate substrate: Ser164 and His191. His191 and His193 together coordinate Mn(2+).

The protein belongs to the 4-hydroxy-2-oxovalerate aldolase family.

It catalyses the reaction (S)-4-hydroxy-2-oxopentanoate = acetaldehyde + pyruvate. In Burkholderia thailandensis (strain ATCC 700388 / DSM 13276 / CCUG 48851 / CIP 106301 / E264), this protein is 4-hydroxy-2-oxovalerate aldolase (mhpE).